Here is an 82-residue protein sequence, read N- to C-terminus: RNA-binding protein Hfq (82 aa).

Positions 11 to 71 constitute a Sm domain; it reads DTFLNHVRKT…ISTIMPGAPI (61 aa).

Belongs to the Hfq family. As to quaternary structure, homohexamer.

In terms of biological role, RNA chaperone that binds small regulatory RNA (sRNAs) and mRNAs to facilitate mRNA translational regulation in response to envelope stress, environmental stress and changes in metabolite concentrations. Also binds with high specificity to tRNAs. The polypeptide is RNA-binding protein Hfq (Rhodopseudomonas palustris (strain HaA2)).